A 224-amino-acid polypeptide reads, in one-letter code: UPF0758 protein RSc2444 (224 aa).

Positions 102 to 224 constitute an MPN domain; that stretch reads TLESPQSVKD…VYSFLEHGKM (123 aa). Zn(2+) contacts are provided by His-173, His-175, and Asp-186. The JAMM motif motif lies at 173–186; the sequence is HNHPTGHVEPSESD.

It belongs to the UPF0758 family.

This chain is UPF0758 protein RSc2444, found in Ralstonia nicotianae (strain ATCC BAA-1114 / GMI1000) (Ralstonia solanacearum).